The primary structure comprises 1239 residues: Structural polyprotein (1239 aa).

Residues 15 to 95 form a disordered region; it reads RPAPVQRYIP…KKKSKPGKRM (81 aa). The tract at residues 36–62 is host transcription inhibition; the sequence is RGPSQLQQLVAALGALALQPKQKQKRA. Low complexity predominate over residues 38–56; sequence PSQLQQLVAALGALALQPK. Positions 55-91 match the Nuclear localization signal motif; it reads PKQKQKRAQKKPKKTPPPKPKKTQKPKKPTQKKKSKP. Over residues 57 to 95 the composition is skewed to basic residues; that stretch reads QKQKRAQKKPKKTPPPKPKKTQKPKKPTQKKKSKPGKRM. A binding to the viral RNA region spans residues 78-106; that stretch reads QKPKKPTQKKKSKPGKRMRNCMKIENDCI. Positions 91–105 are ribosome-binding; the sequence is PGKRMRNCMKIENDC. A disulfide bridge connects residues Cys105 and Cys120. The Peptidase S3 domain occupies 105–253; that stretch reads CIFPVMLDGK…RITPEESVEW (149 aa). His131 functions as the Charge relay system in the catalytic mechanism. The Nuclear export signal motif lies at 136-146; it reads IDNPELAKLTF. The interaction with spike glycoprotein E2 stretch occupies residues 147 to 152; that stretch reads KKSSKY. Asp153 serves as the catalytic Charge relay system. The interval 175–185 is dimerization of the capsid protein; that stretch reads PEGHYNWHHGA. Ser205 serves as the catalytic Charge relay system. The interval 211–215 is dimerization of the capsid protein; that stretch reads DNTGK. A functions as an uncleaved signal peptide for the precursor of protein E3/E2 region spans residues 254-269; sequence SAAALNITALCVLQNL. Disulfide bonds link Cys264–Cys273, Cys278–Cys282, Cys281–Cys313, Cys339–Cys443, Cys342–Cys348, Cys411–Cys425, Cys471–Cys585, Cys519–Cys545, and Cys521–Cys539. The N-linked (GlcNAc...) asparagine; by host glycan is linked to Asn268. The Extracellular portion of the chain corresponds to 322–686; sequence SVAHFEAYKA…HYYDLYPYWT (365 aa). Residues 687 to 707 form a helical membrane-spanning segment; it reads ITVLASLGLLIVISSGFSCFL. 2 S-palmitoyl cysteine; by host lipidation sites follow: Cys705 and Cys708. Residues 708 to 751 are Cytoplasmic-facing; that stretch reads CSVARTKCLTPYQLAPGAQLPTFIALLCCAKSARADTLDDFSYL. Residues 710 to 714 are interaction with the capsid protein; that stretch reads VARTK. 3 S-palmitoyl cysteine; by host lipidation sites follow: Cys715, Cys735, and Cys736. A disulfide bridge links Cys715 with Cys736. Residues 752 to 756 lie on the Extracellular side of the membrane; sequence WTNNQ. The chain crosses the membrane as a helical span at residues 757-777; sequence AMFWLQLASPVAAFLCLSYCC. At 778-779 the chain is on the cytoplasmic side; that stretch reads RN. A helical transmembrane segment spans residues 780 to 800; the sequence is LACCMKIFLGISGLCVIATQA. Topologically, residues 801–1216 are extracellular; it reads YEHSTTMPNQ…WQWLAHTTSG (416 aa). Cystine bridges form between Cys849–Cys914, Cys862–Cys894, Cys863–Cys896, and Cys868–Cys878. The segment at 884-901 is E1 fusion peptide loop; the sequence is VYPFMWGGAYCFCDTENS. 3 N-linked (GlcNAc...) asparagine; by host glycosylation sites follow: Asn941, Asn1009, and Asn1070. 4 cysteine pairs are disulfide-bonded: Cys1059–Cys1071, Cys1101–Cys1176, Cys1106–Cys1180, and Cys1128–Cys1170. The chain crosses the membrane as a helical span at residues 1217-1237; it reads PLTILVVAIIVVVVVSIVVCA. The S-palmitoyl cysteine; by host moiety is linked to residue Cys1236. The Cytoplasmic portion of the chain corresponds to 1238–1239; that stretch reads RH.

As to quaternary structure, homodimer. Homomultimer. Interacts with host karyopherin KPNA4; this interaction allows the nuclear import of the viral capsid protein. Interacts with spike glycoprotein E2. Interacts with host IRAK1; the interaction leads to inhibition of IRAK1-dependent signaling. The precursor of protein E3/E2 and E1 form a heterodimer shortly after synthesis. In terms of assembly, interacts with spike glycoprotein E1. The precursor of protein E3/E2 and E1 form a heterodimer shortly after synthesis. Processing of the precursor of protein E3/E2 into E2 and E3 results in a heterodimer of the spike glycoproteins E2 and E1. Spike at virion surface are constituted of a trimer of E2-E1 heterodimers. After target cell attachment and endocytosis, E1 change conformation to form homotrimers. Interacts with 6K protein. As to quaternary structure, interacts with spike glycoprotein E1. Processing of the precursor of protein E3/E2 into E2 and E3 results in a heterodimer of the spike glycoproteins E2 and E1. Spike at virion surface are constituted of a trimer of E2-E1 heterodimers. Interacts with 6K protein. Interacts with host MXRA8; this interaction mediates virus entry. Interacts with the capsid protein. Oligomer. Interacts with spike glycoprotein E1. Interacts with spike glycoprotein E2. Post-translationally, structural polyprotein: Specific enzymatic cleavages in vivo yield mature proteins. Capsid protein is auto-cleaved during polyprotein translation, unmasking a signal peptide at the N-terminus of the precursor of E3/E2. The remaining polyprotein is then targeted to the host endoplasmic reticulum, where host signal peptidase cleaves it into pE2, 6K and E1 proteins. pE2 is further processed to mature E3 and E2 by host furin in trans-Golgi vesicle. In terms of processing, palmitoylated via thioester bonds. These palmitoylations may induce disruption of the C-terminus transmembrane. This would result in the reorientation of E2 C-terminus from lumenal to cytoplasmic side. N-glycosylated. Post-translationally, palmitoylated via thioester bonds.

It localises to the virion. The protein localises to the host cytoplasm. Its subcellular location is the host cell membrane. The protein resides in the host nucleus. It is found in the virion membrane. It localises to the host Golgi apparatus. The protein localises to the host trans-Golgi network. Its subcellular location is the host endoplasmic reticulum. It catalyses the reaction Autocatalytic release of the core protein from the N-terminus of the togavirus structural polyprotein by hydrolysis of a -Trp-|-Ser- bond.. Its function is as follows. Forms an icosahedral capsid with a T=4 symmetry composed of 240 copies of the capsid protein surrounded by a lipid membrane through which penetrate 80 spikes composed of trimers of E1-E2 heterodimers. The capsid protein binds to the viral RNA genome at a site adjacent to a ribosome binding site for viral genome translation following genome release. Possesses a protease activity that results in its autocatalytic cleavage from the nascent structural protein. Following its self-cleavage, the capsid protein transiently associates with ribosomes, and within several minutes the protein binds to viral RNA and rapidly assembles into icosahedric core particles. The resulting nucleocapsid eventually associates with the cytoplasmic domain of the spike glycoprotein E2 at the cell membrane, leading to budding and formation of mature virions. In case of infection, new virions attach to target cells and after clathrin-mediated endocytosis their membrane fuses with the host endosomal membrane. This leads to the release of the nucleocapsid into the cytoplasm, followed by an uncoating event necessary for the genomic RNA to become accessible. The uncoating might be triggered by the interaction of capsid proteins with ribosomes. Binding of ribosomes would release the genomic RNA since the same region is genomic RNA-binding and ribosome-binding. Specifically inhibits interleukin-1 receptor-associated kinase 1/IRAK1-dependent signaling during viral entry, representing a means by which the alphaviruses may evade innate immune detection and activation prior to viral gene expression. Functionally, provides the signal sequence for the translocation of the precursor of protein E3/E2 to the host endoplasmic reticulum. Furin-cleaved E3 remains associated with spike glycoprotein E1 and mediates pH protection of the latter during the transport via the secretory pathway. After virion release from the host cell, the assembly protein E3 is gradually released in the extracellular space. Plays a role in viral attachment to target host cell, by binding to the cell receptor MXRA8. Synthesized as a p62 precursor which is processed by furin at the cell membrane just before virion budding, giving rise to E2-E1 heterodimer. The p62-E1 heterodimer is stable, whereas E2-E1 is unstable and dissociate at low pH. p62 is processed at the last step, presumably to avoid E1 fusion activation before its final export to cell surface. E2 C-terminus contains a transitory transmembrane that would be disrupted by palmitoylation, resulting in reorientation of the C-terminal tail from lumenal to cytoplasmic side. This step is critical since E2 C-terminus is involved in budding by interacting with capsid proteins. This release of E2 C-terminus in cytoplasm occurs lately in protein export, and precludes premature assembly of particles at the endoplasmic reticulum membrane. In terms of biological role, acts as a viroporin that participates in virus glycoprotein processing and transport to the plasma membrane, cell permeabilization and budding of viral particles. The cation channel is permeable to Na(+)&gt;K(+)&gt;Ca(2+) in vitro. Disrupts the calcium homeostasis of the cell, probably at the endoplasmic reticulum level. This leads to cytoplasmic calcium elevation. Because of its lipophilic properties, the 6K protein is postulated to influence the selection of lipids that interact with the transmembrane domains of the glycoproteins, which, in turn, affects the deformability of the bilayer required for the extreme curvature that occurs as budding proceeds. Present in low amount in virions, about 3% compared to viral glycoproteins. Its function is as follows. Class II viral fusion protein. Fusion activity is inactive as long as E1 is bound to E2 in mature virion. After virus attachment to target cell via host MXRA8 and endocytosis, acidification of the endosome induce dissociation of E1/E2 heterodimer and concomitant trimerization of the E1 subunits. This E1 trimer is fusion active, and promotes release of viral nucleocapsid in cytoplasm after endosome and viral membrane fusion. Efficient fusion requires the presence of cholesterol and sphingolipid in the target membrane. The sequence is that of Structural polyprotein from Anopheles amictus (Common banded mosquito).